The following is a 1691-amino-acid chain: MNTKILLSLPWPKLMDPYMLLGFYYGLLTTLPVGPSQILCVRSFLLGGNLSGLISISGSVLAQLITASSIYCSPIYLLLLRPHLLTIVAIPYTLLFCLVIKDFPNYQILRPVTSLRDSRVARLFLISFFFQILNPIMLPNSVLTRLIYLYFFRYSTNTVFMVSTFMGWLTGQAAFNFFSRLLLSRVKGDSPILYLVAKRFIYATFSIVSISYAVAYLGRAPVSFWTKKFMNESHDREMNLWEIAEYSDLLWWFFKPWPTSFFDPSRANRSNRFVKNRRFHMNNTFYKGRTSTYFFEKCLTDGKERLSFLALPSLSIFGKEMYQSMAKSRRSFGIRLSYQNWVSKKLAKTKFFEKELTDQIKLLDTGSSFSKTMSRKTRLMGGKRRRIPRTYDPFVNNFRIRIPVSQTFLLEDDLGLSLWEWDKLATERKNRKAKKTVRINAIKDKIFTKDRRWKHGYGNPLPWEPLPSRSKRMFYFIFENRALYDYDLQNILKKIKSSPTLDVTWKEIMDLDYEDHILFLTYLEVGCCHRFGWISPLKAFLRKSSKSLSNVERRIRRLNKIGNLSMDLARYTILYFENNFDIPGGDGDFRYRKLRNVGITFAKGKPRSERLMKRYAKVSDFRRKFLKGSMRSRRRKTLLWKALQEKIRSSFFLRSAERTILFQSLIERLTTSSREEKFSELEKDTDYEFQKQLLDISLSAKRSLIGESKLTRSAIAARSDIGPIHNGRGYMLVFQSRFRKFIKLPVLIVLKNIGRILLRQNSEWNKDWTGWKKEIHINCTFDGEDFSQDELPPRWLREGIQIKIVYPFQLKPWHTDGNEKQHTLQRKHKEIGSKSRELKSKRKLKQKKHKFTYLTVLGYQTDIPFGTIQKKTSFWKPVRRKLIRICKRSLPRQIKQAYQFIHSRFEKVSKLNSTPSKKLNLISNLRQGGKLLSDYSLDEKSWMKTSSTNYVNEKTKPNCNVISNSERFIAIGGEMSPANVTRKQLVTRDQVEREFLMSIVAVDSKNLLDEKIDDPYSKITSKDLETGDTTSGDINLVNSTKFERKQLVDSEEAGLSLYLLVRELIETFVSVLINLPFTINRIFVHYFTEFLALYTKLAGILDNINEGSNLSTRSKSLQFDLPSQTCIYIDMWNIGMRGSLNLDLLVNDKRSSSNCGVKNRQSGIYVETDGVSNLYQPKMYEKQTPVHYNLIATKFLSPEIRNNHVNDLTMCFDTETGKTDEEFFDEKVARSIENWGFLNKSCKLDEINWNEWLYSLSRYNLPLTAWRNIAPRKWKVCLSELSSIETNTITELKDQVSQNKLHSYYSIYTKKSFLRNKISNFSKLRKHRNLLQNLTDSVQNGDVENLSVQRDIMEQRFHCKSCIQKSSRGGRNRISKFVHFLSSNVESKNNLNLQIDLLSWLDPDIAKTKIFLKKKKKAKQLKNPLLRNHYRYRYVLDISGRFQKVLNQLNDLTLDEREDADYIFRWKFKFETELEKFRNLISLTRMLGDDQDLITLCTNIEVNSDLLNLQFNAKTKRDMFHNLSVVSAHRLRLVFDDQDLLYKIINPLLKFKGRLRGIFRRRLYRNVYNGSYISNLSHILTERNCKQSCLYNIDDLLSPRRRREFRFLYCLLSPKIEYSQYISRIKKIDNAEKKQTLYHLPRPIRIQKIKRFLWPSHRLEEAACTGRSCVGVMTGSRFVTLRIRMYPIPLN.

Transmembrane regions (helical) follow at residues 19 to 39, 60 to 80, 84 to 104, 123 to 143, 158 to 178, and 200 to 220; these read MLLGFYYGLLTTLPVGPSQIL, VLAQLITASSIYCSPIYLLLL, LLTIVAIPYTLLFCLVIKDFP, LFLISFFFQILNPIMLPNSVL, TVFMVSTFMGWLTGQAAFNFF, and FIYATFSIVSISYAVAYLGRA. The interval 819-839 is disordered; it reads EKQHTLQRKHKEIGSKSRELK.

This sequence belongs to the TIC214 family. Part of the Tic complex.

The protein localises to the plastid. The protein resides in the chloroplast inner membrane. In terms of biological role, involved in protein precursor import into chloroplasts. May be part of an intermediate translocation complex acting as a protein-conducting channel at the inner envelope. The chain is Protein TIC 214 from Adiantum capillus-veneris (Maidenhair fern).